We begin with the raw amino-acid sequence, 114 residues long: Transmembrane protein 256 homolog (114 aa).

The N-terminal stretch at 1-25 is a signal peptide; sequence MAAGRVWGRLGAVSGALAVTAGAYG. The Extracellular portion of the chain corresponds to 26–64; it reads AHGFRRSDRDEYLKELFETGNRYHFLHSLALLAVPHCRR. Residues 65–85 traverse the membrane as a helical segment; the sequence is PLLAGSLLTSGIVLFSGTFYY. At 86–93 the chain is on the cytoplasmic side; the sequence is QALSGDPT. The helical transmembrane segment at 94–114 threads the bilayer; that stretch reads LTKAAPYGGTLLILGWAAMAL.

The protein belongs to the TMEM256 family.

Its subcellular location is the cell membrane. The chain is Transmembrane protein 256 homolog from Bufo gargarizans (Asian toad).